Reading from the N-terminus, the 452-residue chain is Phosphoglucosamine mutase 2 (452 aa).

The active-site Phosphoserine intermediate is the Ser101. Residues Ser101, Asp245, Asp247, and Asp249 each contribute to the Mg(2+) site. Residue Ser101 is modified to Phosphoserine.

This sequence belongs to the phosphohexose mutase family. Requires Mg(2+) as cofactor. Post-translationally, activated by phosphorylation.

The catalysed reaction is alpha-D-glucosamine 1-phosphate = D-glucosamine 6-phosphate. In terms of biological role, catalyzes the conversion of glucosamine-6-phosphate to glucosamine-1-phosphate. The chain is Phosphoglucosamine mutase 2 from Shewanella amazonensis (strain ATCC BAA-1098 / SB2B).